A 239-amino-acid polypeptide reads, in one-letter code: 1-(5-phosphoribosyl)-5-[(5-phosphoribosylamino)methylideneamino] imidazole-4-carboxamide isomerase (239 aa).

The active-site Proton acceptor is the Asp7. Residue Asp129 is the Proton donor of the active site.

It belongs to the HisA/HisF family.

It is found in the cytoplasm. The catalysed reaction is 1-(5-phospho-beta-D-ribosyl)-5-[(5-phospho-beta-D-ribosylamino)methylideneamino]imidazole-4-carboxamide = 5-[(5-phospho-1-deoxy-D-ribulos-1-ylimino)methylamino]-1-(5-phospho-beta-D-ribosyl)imidazole-4-carboxamide. It participates in amino-acid biosynthesis; L-histidine biosynthesis; L-histidine from 5-phospho-alpha-D-ribose 1-diphosphate: step 4/9. This chain is 1-(5-phosphoribosyl)-5-[(5-phosphoribosylamino)methylideneamino] imidazole-4-carboxamide isomerase, found in Lactiplantibacillus plantarum (strain ATCC BAA-793 / NCIMB 8826 / WCFS1) (Lactobacillus plantarum).